Consider the following 359-residue polypeptide: DNA replication and repair protein RecF (359 aa).

30–37 lines the ATP pocket; it reads GPNGSGKT.

It belongs to the RecF family.

It is found in the cytoplasm. In terms of biological role, the RecF protein is involved in DNA metabolism; it is required for DNA replication and normal SOS inducibility. RecF binds preferentially to single-stranded, linear DNA. It also seems to bind ATP. In Vibrio vulnificus (strain CMCP6), this protein is DNA replication and repair protein RecF.